The primary structure comprises 565 residues: NAD-dependent malic enzyme (565 aa).

Tyr104 acts as the Proton donor in catalysis. Position 157 (Arg157) interacts with NAD(+). Lys175 serves as the catalytic Proton acceptor. Residues Glu246, Asp247, and Asp270 each coordinate a divalent metal cation. Residues Asp270 and Asn418 each contribute to the NAD(+) site.

The protein belongs to the malic enzymes family. Homotetramer. Requires Mg(2+) as cofactor. The cofactor is Mn(2+).

The enzyme catalyses (S)-malate + NAD(+) = pyruvate + CO2 + NADH. It carries out the reaction oxaloacetate + H(+) = pyruvate + CO2. This is NAD-dependent malic enzyme from Pectobacterium carotovorum subsp. carotovorum (strain PC1).